The sequence spans 411 residues: Probable indole-3-pyruvate monooxygenase YUCCA4 (411 aa).

FAD is bound at residue 21–26 (GAGPSG). 183 to 188 (GCGNSG) lines the NADP(+) pocket.

It belongs to the FMO family. Requires FAD as cofactor. In terms of tissue distribution, expressed in leaves, stems, flowers, buds and siliques. Detected in the apical gynoecium and in the developing ovules.

It localises to the cytoplasm. It is found in the endoplasmic reticulum membrane. The catalysed reaction is indole-3-pyruvate + NADPH + O2 + H(+) = (indol-3-yl)acetate + CO2 + NADP(+) + H2O. Its pathway is plant hormone metabolism; auxin biosynthesis. In terms of biological role, involved in auxin biosynthesis. Both isoforms are catalitically active. Involved during embryogenesis and seedling development. Required for the formation of floral organs and vascular tissues. Belongs to the set of redundant YUCCA genes probably responsible for auxin biosynthesis in shoots. The polypeptide is Probable indole-3-pyruvate monooxygenase YUCCA4 (YUC4) (Arabidopsis thaliana (Mouse-ear cress)).